The primary structure comprises 160 residues: Cytochrome b6-f complex subunit 4 (160 aa).

Transmembrane regions (helical) follow at residues 36-56, 95-115, and 131-151; these read LLYI…GLAV, LLGI…PFIE, and VVFL…CLPI.

It belongs to the cytochrome b family. PetD subfamily. As to quaternary structure, the 4 large subunits of the cytochrome b6-f complex are cytochrome b6, subunit IV (17 kDa polypeptide, PetD), cytochrome f and the Rieske protein, while the 4 small subunits are PetG, PetL, PetM and PetN. The complex functions as a dimer.

Its subcellular location is the cellular thylakoid membrane. Component of the cytochrome b6-f complex, which mediates electron transfer between photosystem II (PSII) and photosystem I (PSI), cyclic electron flow around PSI, and state transitions. This is Cytochrome b6-f complex subunit 4 from Prochlorococcus marinus (strain MIT 9515).